Here is a 133-residue protein sequence, read N- to C-terminus: Transcription antitermination protein NusB (133 aa).

Belongs to the NusB family.

Involved in transcription antitermination. Required for transcription of ribosomal RNA (rRNA) genes. Binds specifically to the boxA antiterminator sequence of the ribosomal RNA (rrn) operons. The sequence is that of Transcription antitermination protein NusB from Clostridium botulinum (strain Alaska E43 / Type E3).